Reading from the N-terminus, the 444-residue chain is Glutamyl-tRNA reductase (444 aa).

Substrate contacts are provided by residues 49 to 52 (TCNR), serine 109, 114 to 116 (ETQ), and glutamine 120. The Nucleophile role is filled by cysteine 50. 189–194 (GAGKMG) is an NADP(+) binding site.

The protein belongs to the glutamyl-tRNA reductase family. In terms of assembly, homodimer.

The enzyme catalyses (S)-4-amino-5-oxopentanoate + tRNA(Glu) + NADP(+) = L-glutamyl-tRNA(Glu) + NADPH + H(+). It participates in porphyrin-containing compound metabolism; protoporphyrin-IX biosynthesis; 5-aminolevulinate from L-glutamyl-tRNA(Glu): step 1/2. Catalyzes the NADPH-dependent reduction of glutamyl-tRNA(Glu) to glutamate 1-semialdehyde (GSA). The polypeptide is Glutamyl-tRNA reductase (Bacillus cereus (strain 03BB102)).